The chain runs to 265 residues: Dimethylsulfide dehydrogenase subunit gamma (265 aa).

The signal sequence occupies residues 1–25; it reads MPGFRFLLAATAAFLATSPALPLSA. The heme b site is built by H81 and M147.

Heterotrimer of alpha, beta and gamma subunits. Heme b is required as a cofactor.

It localises to the periplasm. In terms of biological role, may transfer electrons to the iron-sulfur centers of DdhB. The chain is Dimethylsulfide dehydrogenase subunit gamma (ddhC) from Rhodovulum sulfidophilum (Rhodobacter sulfidophilus).